Reading from the N-terminus, the 1175-residue chain is 1-phosphatidylinositol 4,5-bisphosphate phosphodiesterase beta-4 (1175 aa).

N-acetylalanine is present on Ala2. The PI-PLC X-box domain occupies 313–463 (QEMDHPLAHY…LKRKILIKNK (151 aa)). Active-site residues include His328 and His375. Positions 487 to 512 (AAPASILEDDNEEEIESADQEEEAHP) are disordered. Residues 493–508 (LEDDNEEEIESADQEE) show a composition bias toward acidic residues. In terms of domain architecture, PI-PLC Y-box spans 565-681 (LSTMINYAQP…GYLLKPDFMR (117 aa)). Residues 684–809 (DRTFDPFSET…SLRNEGNKPL (126 aa)) enclose the C2 domain. Disordered regions lie at residues 860-904 (SDIA…LGSG) and 1082-1110 (KISM…VREL). Polar residues-rich tracts occupy residues 885 to 900 (VTPQ…TTAA) and 1085 to 1094 (MENSKAISQD). The residue at position 886 (Thr886) is a Phosphothreonine. Residues 1095-1109 (KSIKNKAERERRVRE) are compositionally biased toward basic and acidic residues.

It depends on Ca(2+) as a cofactor. In terms of tissue distribution, preferentially expressed in the retina.

The protein localises to the cell membrane. The enzyme catalyses a 1,2-diacyl-sn-glycero-3-phospho-(1D-myo-inositol-4,5-bisphosphate) + H2O = 1D-myo-inositol 1,4,5-trisphosphate + a 1,2-diacyl-sn-glycerol + H(+). It carries out the reaction a 1,2-diacyl-sn-glycero-3-phospho-(1D-myo-inositol) + H2O = 1D-myo-inositol 1-phosphate + a 1,2-diacyl-sn-glycerol + H(+). Its function is as follows. Activated phosphatidylinositol-specific phospholipase C enzymes catalyze the production of the second messenger molecules diacylglycerol (DAG) and inositol 1,4,5-trisphosphate (IP3) involved in G-protein coupled receptor signaling pathways. PLCB4 is a direct effector of the endothelin receptor signaling pathway that plays an essential role in lower jaw and middle ear structures development. The protein is 1-phosphatidylinositol 4,5-bisphosphate phosphodiesterase beta-4 of Rattus norvegicus (Rat).